A 249-amino-acid chain; its full sequence is uncharacterized protein (249 aa).

This is an uncharacterized protein from Escherichia coli O6:H1 (strain CFT073 / ATCC 700928 / UPEC).